The chain runs to 912 residues: Protein transport protein SEC24-2 (912 aa).

Residues 1–11 show a composition bias toward basic residues; that stretch reads MSNPSRPKKRV. Disordered stretches follow at residues 1–83 and 102–129; these read MSNP…QQIS and PNAYYQPNNGNNIQPTGENKPSLTPGRP. Polar residues-rich tracts occupy residues 33–45, 53–74, and 106–129; these read SGQTMQSQVSGSA, GQFTQPMNASDAQNQPQFMTPA, and YQPNNGNNIQPTGENKPSLTPGRP. Positions 226, 229, 248, and 251 each coordinate Zn(2+). The interval 226–251 is zinc finger-like; it reads CRRCRGYLNPFVKILQVESKWRCNFC.

The protein belongs to the SEC23/SEC24 family. SEC24 subfamily. As to quaternary structure, the COPII coat is composed of at least 5 proteins: the SEC23/24 complex, the SEC13/31 complex, and the protein SAR1. Golgi apparatus membrane; Peripheral membrane protein; Cytoplasmic side.

The protein resides in the cytoplasm. Its subcellular location is the cytoplasmic vesicle. It localises to the COPII-coated vesicle membrane. The protein localises to the endoplasmic reticulum membrane. It is found in the golgi apparatus membrane. Its function is as follows. Component of the coat protein complex II (COPII) which promotes the formation of transport vesicles from the endoplasmic reticulum (ER). The coat has two main functions, the physical deformation of the endoplasmic reticulum membrane into vesicles and the selection of cargo molecules. This Naumovozyma castellii (Yeast) protein is Protein transport protein SEC24-2 (SEC242).